The following is a 149-amino-acid chain: D-aminoacyl-tRNA deacylase (149 aa).

Positions 141–142 match the Gly-cisPro motif, important for rejection of L-amino acids motif; that stretch reads GP.

This sequence belongs to the DTD family. Homodimer.

Its subcellular location is the cytoplasm. It carries out the reaction glycyl-tRNA(Ala) + H2O = tRNA(Ala) + glycine + H(+). The enzyme catalyses a D-aminoacyl-tRNA + H2O = a tRNA + a D-alpha-amino acid + H(+). Its function is as follows. An aminoacyl-tRNA editing enzyme that deacylates mischarged D-aminoacyl-tRNAs. Also deacylates mischarged glycyl-tRNA(Ala), protecting cells against glycine mischarging by AlaRS. Acts via tRNA-based rather than protein-based catalysis; rejects L-amino acids rather than detecting D-amino acids in the active site. By recycling D-aminoacyl-tRNA to D-amino acids and free tRNA molecules, this enzyme counteracts the toxicity associated with the formation of D-aminoacyl-tRNA entities in vivo and helps enforce protein L-homochirality. In Hydrogenovibrio crunogenus (strain DSM 25203 / XCL-2) (Thiomicrospira crunogena), this protein is D-aminoacyl-tRNA deacylase.